A 115-amino-acid polypeptide reads, in one-letter code: Large ribosomal subunit protein bL19 (115 aa).

The protein belongs to the bacterial ribosomal protein bL19 family.

Functionally, this protein is located at the 30S-50S ribosomal subunit interface and may play a role in the structure and function of the aminoacyl-tRNA binding site. The polypeptide is Large ribosomal subunit protein bL19 (Syntrophotalea carbinolica (strain DSM 2380 / NBRC 103641 / GraBd1) (Pelobacter carbinolicus)).